The following is a 231-amino-acid chain: Eukaryotic translation initiation factor 4E allele Eva1 (231 aa).

A compositionally biased stretch (basic and acidic residues) spans 1 to 20 (MAAAEMERTTSFDAAEKLKA). Positions 1 to 34 (MAAAEMERTTSFDAAEKLKAADAGGGEVDDELEE) are disordered. EIF4G-binding regions lie at residues 56–59 (HPLE) and 66–102 (FDNP…NNIH). MRNA is bound by residues 74 to 79 (RQIDWG), Lys-106, and 124 to 125 (WE). A disulfide bond links Cys-129 and Cys-167. Residues 150 to 159 (YTLLAMIGHQ) form an EIF4G-binding region. Residues 174–179 (RVKGEK) and 219–223 (KRLDR) each bind mRNA.

The protein belongs to the eukaryotic initiation factor 4E family. In terms of assembly, EIF4F is a multi-subunit complex, the composition of which varies with external and internal environmental conditions. It is composed of at least EIF4A, EIF4E and EIF4G. EIF4E is also known to interact with other partners. In higher plants two isoforms of EIF4F have been identified, named isoform EIF4F and isoform EIF(iso)4F. Isoform EIF4F has subunits p220 and p26, whereas isoform EIF(iso)4F has subunits p82 and p28. As to quaternary structure, (Microbial infection) Interacts with potyvirus viral genome-linked protein (VPg); this interaction is possible in susceptible hosts but impaired in resistant plants. According to the redox status, the Cys-129-Cys-167 disulfide bridge may have a role in regulating protein function by affecting its ability to bind capped mRNA.

Its subcellular location is the nucleus. It is found in the cytoplasm. Component of the protein complex eIF4F, which is involved in the recognition of the mRNA cap, ATP-dependent unwinding of 5'-terminal secondary structure and recruitment of mRNA to the ribosome. Recognizes and binds the 7-methylguanosine-containing mRNA cap during an early step in the initiation of protein synthesis and facilitates ribosome binding by inducing the unwinding of the mRNAs secondary structures. Key component of recessive resistance to potyviruses. Its function is as follows. (Microbial infection) Susceptibility host factor required for viral infection (e.g. Potato virus Y (PVY)) by recruiting viral RNAs to the host ribosomal complex via an interaction with viral genome-linked protein (VPg). Displayed sequence is the allele Eva1 that confers resistance to potato virus Y (PVY) by failing to interact with the viral VPg protein. In Solanum etuberosum (Wild potato), this protein is Eukaryotic translation initiation factor 4E allele Eva1.